The primary structure comprises 1207 residues: DNA-directed RNA polymerase subunit beta' (1207 aa).

Residues cysteine 60, cysteine 62, cysteine 75, and cysteine 78 each contribute to the Zn(2+) site. Residues aspartate 450, aspartate 452, and aspartate 454 each coordinate Mg(2+). Residues cysteine 818, cysteine 892, cysteine 899, and cysteine 902 each coordinate Zn(2+).

The protein belongs to the RNA polymerase beta' chain family. As to quaternary structure, the RNAP catalytic core consists of 2 alpha, 1 beta, 1 beta' and 1 omega subunit. When a sigma factor is associated with the core the holoenzyme is formed, which can initiate transcription. The cofactor is Mg(2+). It depends on Zn(2+) as a cofactor.

It catalyses the reaction RNA(n) + a ribonucleoside 5'-triphosphate = RNA(n+1) + diphosphate. Functionally, DNA-dependent RNA polymerase catalyzes the transcription of DNA into RNA using the four ribonucleoside triphosphates as substrates. The protein is DNA-directed RNA polymerase subunit beta' of Lactococcus lactis subsp. cremoris (strain MG1363).